Consider the following 568-residue polypeptide: Kelch-like protein 12 (568 aa).

In terms of domain architecture, BTB spans 33–100 (CDVTLRVEQK…VYTETVHVTV (68 aa)). The 102-residue stretch at 135–236 (CLGIRDFAET…LTPRYITDVI (102 aa)) folds into the BACK domain. 6 Kelch repeats span residues 282 to 329 (VLLV…SLHD), 331 to 379 (IYVI…TLGD), 380 to 426 (MIYV…VASG), 427 to 473 (IIYC…LLND), 475 to 520 (IYVV…VLRG), and 522 to 567 (LYAI…VLRE). Residues 405 to 568 (QWSMLGDMQT…DAGVCVLREK (164 aa)) are interaction with DVL3.

As to quaternary structure, component of the BCR(KLHL12) E3 ubiquitin ligase complex, at least composed of CUL3 and KLHL12 and RBX1. This complex interacts with DVL3 upon activation of the Wnt signaling pathway by WNT3A. Interacts with DRD4, KLHL2 and SEC31A. Interacts with PEF1 and PDCD6/ALG-2; interaction takes place in response to cytosolic calcium increase and leads to bridge together the BCR(KLHL12) complex and SEC31 (SEC31A or SEC31B). Post-translationally, ubiquitinated by the SCF(FBXL17) complex, leading to its degradation by the proteasome: ubiquitination by the SCF(FBXL17) complex takes place when aberrant BTB domain dimers are formed.

It is found in the cytoplasmic vesicle. The protein resides in the COPII-coated vesicle. It functions in the pathway protein modification; protein ubiquitination. Its function is as follows. Substrate-specific adapter of a BCR (BTB-CUL3-RBX1) E3 ubiquitin ligase complex that acts as a negative regulator of Wnt signaling pathway and ER-Golgi transport. The BCR(KLHL12) complex is involved in ER-Golgi transport by regulating the size of COPII coats, thereby playing a key role in collagen export, which is required for embryonic stem (ES) cells division: BCR(KLHL12) acts by mediating monoubiquitination of SEC31 (SEC31A or SEC31B). The BCR(KLHL12) complex is also involved in neural crest specification: in response to cytosolic calcium increase, interacts with the heterodimer formed with PEF1 and PDCD6/ALG-2, leading to bridge together the BCR(KLHL12) complex and SEC31 (SEC31A or SEC31B), promoting monoubiquitination of SEC31 and subsequent collagen export. As part of the BCR(KLHL12) complex, also acts as a negative regulator of the Wnt signaling pathway by mediating ubiquitination and subsequent proteolysis of DVL3. The BCR(KLHL12) complex also mediates polyubiquitination of DRD4 and PEF1, without leading to degradation of these proteins. This Rattus norvegicus (Rat) protein is Kelch-like protein 12 (Klhl12).